A 359-amino-acid polypeptide reads, in one-letter code: MLSIPPYYRVKNCNLIVDCQYGSTGKGLLAGYLGALEAPQVLCMAPSPNAGHTLVEEDGTARVHKMLPLGITSPSLERIYLGPGSVIDMDRLLEEYLALPRQVELWVHQNAAVVLQEHRDEEAAGGLAPGSTRSGAGSAFIAKIRRRPGTLLFGEAVRDHPLHGVVRVVDTRTAQDMLFRTRSIQAEGCQGYSLSVHHGAYPYCTARDVTTAQLIADCGLPYDVARIARVVGSMRTYPIRVANRPEAGEWSGPCYPDSVECQFADLGLEQEYTTVTKLPRRIFTFSAIQAHEAIAQNGVDEVFLNFAQYPPSLGALEDILDAIEARAEVTYVGFGPKVTDVYHTPTRAELEGLYARYRR.

The active-site Proton acceptor is S23. ATP is bound by residues S23, T24, G25, K26, and G27. S23 provides a ligand contact to dGMP. S23 contacts Mg(2+). Residue N49 coordinates dGMP. ATP contacts are provided by G51, H52, and T53. Position 51 (G51) interacts with Mg(2+). Residues S131, T132, and R146 each coordinate dGMP. Position 190 (Q190) interacts with ATP. T205 lines the dGMP pocket. Residue T274 participates in Mg(2+) binding. Residues T274, V275, and R280 each coordinate L-aspartate. Residues N305 and Q308 each contribute to the ATP site.

It belongs to the Caudovirales PurZ family. Mg(2+) serves as cofactor.

It carries out the reaction dGMP + L-aspartate + ATP = (2S)-2-amino-2'-deoxyadenylo-succinate + ADP + phosphate + 2 H(+). It participates in purine metabolism. In terms of biological role, involved in the synthesis of the atypical nucleotide dZTP (2-amino-2'-deoxyadenosine-5'-triphosphate). Catalyzes the condensation of aspartate with deoxyguanylate into dSMP (N6-succino-2-amino-2'-deoxyadenylate), which undergoes defumarylation and phosphorylation respectively by host PurB and guanylate/nucleoside diphosphate kinases to give dZTP. dZTP is integrated into the viral genome instead of adenine by the viral DNA polymerase. This Z-base probably completely replaces adenosine and forms a triple bond to the opposite T-base. The resulting non-standard viral DNA is called Z-genome. The chemically modified DNA is probably harder for the host bacteria to digest with nucleases or restriction enzymes. The polypeptide is N6-succino-2-amino-2'-deoxyadenylate synthase (Cyanophage S-2L (Cyanobacteria phage S-2L)).